The sequence spans 330 residues: Beta-ketoacyl-[acyl-carrier-protein] synthase III (330 aa).

Catalysis depends on residues Cys114 and His257. The segment at 258 to 262 (QANLR) is ACP-binding. Asn287 is an active-site residue.

This sequence belongs to the thiolase-like superfamily. FabH family. Homodimer.

The protein resides in the cytoplasm. The enzyme catalyses malonyl-[ACP] + acetyl-CoA + H(+) = 3-oxobutanoyl-[ACP] + CO2 + CoA. It participates in lipid metabolism; fatty acid biosynthesis. Catalyzes the condensation reaction of fatty acid synthesis by the addition to an acyl acceptor of two carbons from malonyl-ACP. Catalyzes the first condensation reaction which initiates fatty acid synthesis and may therefore play a role in governing the total rate of fatty acid production. Possesses both acetoacetyl-ACP synthase and acetyl transacylase activities. Its substrate specificity determines the biosynthesis of branched-chain and/or straight-chain of fatty acids. The chain is Beta-ketoacyl-[acyl-carrier-protein] synthase III from Oleidesulfovibrio alaskensis (strain ATCC BAA-1058 / DSM 17464 / G20) (Desulfovibrio alaskensis).